A 126-amino-acid polypeptide reads, in one-letter code: Large ribosomal subunit protein bL17c (126 aa).

A chloroplast-targeting transit peptide spans 1–10 (MIDNGGRFFA).

In terms of assembly, component of the chloroplast large ribosomal subunit (LSU). Mature 70S chloroplast ribosomes of higher plants consist of a small (30S) and a large (50S) subunit. The 30S small subunit contains 1 molecule of ribosomal RNA (16S rRNA) and 24 different proteins. The 50S large subunit contains 3 rRNA molecules (23S, 5S and 4.5S rRNA) and 33 different proteins.

It is found in the plastid. The protein localises to the chloroplast. Component of the chloroplast ribosome (chloro-ribosome), a dedicated translation machinery responsible for the synthesis of chloroplast genome-encoded proteins, including proteins of the transcription and translation machinery and components of the photosynthetic apparatus. This is Large ribosomal subunit protein bL17c (RPL17) from Spinacia oleracea (Spinach).